A 125-amino-acid polypeptide reads, in one-letter code: Holo-[acyl-carrier-protein] synthase (125 aa).

Mg(2+)-binding residues include Asp8 and Glu57.

This sequence belongs to the P-Pant transferase superfamily. AcpS family. Mg(2+) is required as a cofactor.

Its subcellular location is the cytoplasm. The catalysed reaction is apo-[ACP] + CoA = holo-[ACP] + adenosine 3',5'-bisphosphate + H(+). Transfers the 4'-phosphopantetheine moiety from coenzyme A to a Ser of acyl-carrier-protein. The sequence is that of Holo-[acyl-carrier-protein] synthase from Solibacter usitatus (strain Ellin6076).